Here is a 141-residue protein sequence, read N- to C-terminus: Large ribosomal subunit protein uL11 (141 aa).

Belongs to the universal ribosomal protein uL11 family. In terms of assembly, part of the ribosomal stalk of the 50S ribosomal subunit. Interacts with L10 and the large rRNA to form the base of the stalk. L10 forms an elongated spine to which L12 dimers bind in a sequential fashion forming a multimeric L10(L12)X complex. One or more lysine residues are methylated.

In terms of biological role, forms part of the ribosomal stalk which helps the ribosome interact with GTP-bound translation factors. The chain is Large ribosomal subunit protein uL11 from Streptococcus pneumoniae serotype 2 (strain D39 / NCTC 7466).